We begin with the raw amino-acid sequence, 154 residues long: Large ribosomal subunit protein uL15 (154 aa).

The disordered stretch occupies residues 1–61 (MDLSTLKPVA…GGQMPLMRRM (61 aa)).

It belongs to the universal ribosomal protein uL15 family. As to quaternary structure, part of the 50S ribosomal subunit.

Binds to the 23S rRNA. The polypeptide is Large ribosomal subunit protein uL15 (Oenococcus oeni (strain ATCC BAA-331 / PSU-1)).